Consider the following 155-residue polypeptide: Ribonuclease H (155 aa).

The RNase H type-1 domain occupies 9–150; sequence DGQQVEMWTD…ADALANQGVE (142 aa). Residues Asp-18, Glu-56, Asp-78, and Asp-142 each contribute to the Mg(2+) site.

This sequence belongs to the RNase H family. Monomer. The cofactor is Mg(2+).

Its subcellular location is the cytoplasm. The catalysed reaction is Endonucleolytic cleavage to 5'-phosphomonoester.. Functionally, endonuclease that specifically degrades the RNA of RNA-DNA hybrids. This is Ribonuclease H from Bordetella bronchiseptica (strain ATCC BAA-588 / NCTC 13252 / RB50) (Alcaligenes bronchisepticus).